The sequence spans 414 residues: Gamma-glutamyl phosphate reductase (414 aa).

The protein belongs to the gamma-glutamyl phosphate reductase family.

The protein localises to the cytoplasm. The catalysed reaction is L-glutamate 5-semialdehyde + phosphate + NADP(+) = L-glutamyl 5-phosphate + NADPH + H(+). Its pathway is amino-acid biosynthesis; L-proline biosynthesis; L-glutamate 5-semialdehyde from L-glutamate: step 2/2. Functionally, catalyzes the NADPH-dependent reduction of L-glutamate 5-phosphate into L-glutamate 5-semialdehyde and phosphate. The product spontaneously undergoes cyclization to form 1-pyrroline-5-carboxylate. The chain is Gamma-glutamyl phosphate reductase from Alkaliphilus metalliredigens (strain QYMF).